Reading from the N-terminus, the 448-residue chain is UDP-N-acetylmuramate--L-alanine ligase (448 aa).

118 to 124 (GTHGKTT) contacts ATP.

Belongs to the MurCDEF family.

Its subcellular location is the cytoplasm. The enzyme catalyses UDP-N-acetyl-alpha-D-muramate + L-alanine + ATP = UDP-N-acetyl-alpha-D-muramoyl-L-alanine + ADP + phosphate + H(+). It participates in cell wall biogenesis; peptidoglycan biosynthesis. Cell wall formation. This chain is UDP-N-acetylmuramate--L-alanine ligase, found in Flavobacterium psychrophilum (strain ATCC 49511 / DSM 21280 / CIP 103535 / JIP02/86).